Reading from the N-terminus, the 677-residue chain is Penicillin-binding protein activator LpoA (677 aa).

Residues 1-26 (MLPSKIVRHKAGRFVPVLLAGLILAA) form the signal peptide. C27 carries N-palmitoyl cysteine lipidation. The S-diacylglycerol cysteine moiety is linked to residue C27. The tract at residues 309–359 (QPADANAVVSPSANPAAAQQSGTAQQPATTQQQPQQQPAAEPASNAQVKVY) is disordered. Positions 313–355 (ANAVVSPSANPAAAQQSGTAQQPATTQQQPQQQPAAEPASNAQ) are enriched in low complexity.

It belongs to the LpoA family. In terms of assembly, interacts with PBP1a.

It is found in the cell outer membrane. In terms of biological role, regulator of peptidoglycan synthesis that is essential for the function of penicillin-binding protein 1A (PBP1a). This is Penicillin-binding protein activator LpoA from Pantoea ananatis (strain LMG 20103).